The chain runs to 151 residues: Spore coat polysaccharide biosynthesis protein SpsL (151 aa).

This sequence to dTDP-4-dehydrorhamnose reductase.

It functions in the pathway spore coat biogenesis; spore coat polysaccharide biosynthesis. The protein is Spore coat polysaccharide biosynthesis protein SpsL (spsL) of Bacillus subtilis (strain 168).